A 175-amino-acid polypeptide reads, in one-letter code: Apoptosis regulator Bcl-2 homolog (175 aa).

Positions 37 to 42 (KLYITG) are mediates interaction with human NOP53 and localization to host nucleolus. A helical transmembrane segment spans residues 153–173 (MTALLGSIALLATILAAVAMS).

Belongs to the Bcl-2 family. As to quaternary structure, interacts with human NOP53; may sequester ORF16 in host nucleolus and reduce its antiapoptotic activity. Interacts with ORF55.

It is found in the host membrane. It localises to the host mitochondrion. The protein localises to the host nucleus. The protein resides in the host nucleolus. Functionally, plays a role in the protection against apoptosis mediated by cytotoxic cells during the immune response to acute and persistent viral infection. Contributes therefore to latency establishment. Also plays a role in the inhibition of host starvation-induced autophagy which ultimately contributes to the viral chronic infection. Also participates in the viral genome replication within host nucleus. In Homo sapiens (Human), this protein is Apoptosis regulator Bcl-2 homolog (vBCL2).